The following is a 248-amino-acid chain: tRNA pseudouridine synthase A (248 aa).

The active-site Nucleophile is D52. Position 113 (Y113) interacts with substrate.

This sequence belongs to the tRNA pseudouridine synthase TruA family. As to quaternary structure, homodimer.

The catalysed reaction is uridine(38/39/40) in tRNA = pseudouridine(38/39/40) in tRNA. Its function is as follows. Formation of pseudouridine at positions 38, 39 and 40 in the anticodon stem and loop of transfer RNAs. The polypeptide is tRNA pseudouridine synthase A (Mesorhizobium japonicum (strain LMG 29417 / CECT 9101 / MAFF 303099) (Mesorhizobium loti (strain MAFF 303099))).